Reading from the N-terminus, the 431-residue chain is Tol-Pal system protein TolB (431 aa).

A signal peptide spans 1–26; the sequence is MSLMTKLGFRALVASCLIAAGGAANA. A disordered region spans residues 411-431; it reads PQILSVQGGSVREPSWGPFMQ.

This sequence belongs to the TolB family. The Tol-Pal system is composed of five core proteins: the inner membrane proteins TolA, TolQ and TolR, the periplasmic protein TolB and the outer membrane protein Pal. They form a network linking the inner and outer membranes and the peptidoglycan layer.

Its subcellular location is the periplasm. Its function is as follows. Part of the Tol-Pal system, which plays a role in outer membrane invagination during cell division and is important for maintaining outer membrane integrity. This Burkholderia vietnamiensis (strain G4 / LMG 22486) (Burkholderia cepacia (strain R1808)) protein is Tol-Pal system protein TolB.